The primary structure comprises 379 residues: S-adenosylmethionine synthase (379 aa).

Histidine 15 provides a ligand contact to ATP. Mg(2+) is bound at residue aspartate 17. Glutamate 43 lines the K(+) pocket. L-methionine-binding residues include glutamate 56 and glutamine 99. Residues 99-109 (QSPDITQGVDR) form a flexible loop region. ATP is bound by residues 164–166 (DAK), 230–231 (RF), aspartate 239, 245–246 (RK), alanine 262, and lysine 266. L-methionine is bound at residue aspartate 239. Lysine 270 serves as a coordination point for L-methionine.

Belongs to the AdoMet synthase family. Homotetramer; dimer of dimers. Mg(2+) is required as a cofactor. Requires K(+) as cofactor.

The protein resides in the cytoplasm. The catalysed reaction is L-methionine + ATP + H2O = S-adenosyl-L-methionine + phosphate + diphosphate. Its pathway is amino-acid biosynthesis; S-adenosyl-L-methionine biosynthesis; S-adenosyl-L-methionine from L-methionine: step 1/1. Its function is as follows. Catalyzes the formation of S-adenosylmethionine (AdoMet) from methionine and ATP. The overall synthetic reaction is composed of two sequential steps, AdoMet formation and the subsequent tripolyphosphate hydrolysis which occurs prior to release of AdoMet from the enzyme. The polypeptide is S-adenosylmethionine synthase (Buchnera aphidicola subsp. Schizaphis graminum (strain Sg)).